We begin with the raw amino-acid sequence, 594 residues long: UvrABC system protein C (594 aa).

Positions 13–99 constitute a GIY-YIG domain; the sequence is NGSGVYQYFD…IKQLKPKYNI (87 aa). Residues 205 to 240 enclose the UVR domain; the sequence is DKLIKELQLKMDRLSSNLRFEEALIYRDRISKIQKI.

It belongs to the UvrC family. In terms of assembly, interacts with UvrB in an incision complex.

Its subcellular location is the cytoplasm. Functionally, the UvrABC repair system catalyzes the recognition and processing of DNA lesions. UvrC both incises the 5' and 3' sides of the lesion. The N-terminal half is responsible for the 3' incision and the C-terminal half is responsible for the 5' incision. This is UvrABC system protein C from Helicobacter acinonychis (strain Sheeba).